A 328-amino-acid chain; its full sequence is 3-dehydroquinate synthase (328 aa).

Belongs to the archaeal-type DHQ synthase family.

The enzyme catalyses 2-amino-2,3,7-trideoxy-D-lyxo-hept-6-ulosonate + NAD(+) + H2O = 3-dehydroquinate + NH4(+) + NADH + H(+). Functionally, catalyzes the oxidative deamination and cyclization of 2-amino-3,7-dideoxy-D-threo-hept-6-ulosonic acid (ADH) to yield 3-dehydroquinate (DHQ), which is fed into the canonical shikimic pathway of aromatic amino acid biosynthesis. This Methanoculleus marisnigri (strain ATCC 35101 / DSM 1498 / JR1) protein is 3-dehydroquinate synthase.